The chain runs to 307 residues: Oxygen-dependent coproporphyrinogen-III oxidase (307 aa).

S94 lines the substrate pocket. Residues H98 and H108 each contribute to the a divalent metal cation site. H108 functions as the Proton donor in the catalytic mechanism. 110-112 (NVR) contributes to the substrate binding site. Positions 147 and 177 each coordinate a divalent metal cation. Residues 242–277 (YVEFNLVWDRGTLFGLQSGGRTESILMSMPPLAQWQ) form an important for dimerization region. Residue 260–262 (GGR) coordinates substrate.

The protein belongs to the aerobic coproporphyrinogen-III oxidase family. As to quaternary structure, homodimer. Requires a divalent metal cation as cofactor.

The protein localises to the cytoplasm. The enzyme catalyses coproporphyrinogen III + O2 + 2 H(+) = protoporphyrinogen IX + 2 CO2 + 2 H2O. It functions in the pathway porphyrin-containing compound metabolism; protoporphyrin-IX biosynthesis; protoporphyrinogen-IX from coproporphyrinogen-III (O2 route): step 1/1. In terms of biological role, involved in the heme biosynthesis. Catalyzes the aerobic oxidative decarboxylation of propionate groups of rings A and B of coproporphyrinogen-III to yield the vinyl groups in protoporphyrinogen-IX. The polypeptide is Oxygen-dependent coproporphyrinogen-III oxidase (Chromohalobacter salexigens (strain ATCC BAA-138 / DSM 3043 / CIP 106854 / NCIMB 13768 / 1H11)).